We begin with the raw amino-acid sequence, 410 residues long: Peptidase T (410 aa).

H79 is a Zn(2+) binding site. Residue D81 is part of the active site. D142 is a Zn(2+) binding site. E176 (proton acceptor) is an active-site residue. 3 residues coordinate Zn(2+): E177, D199, and H381.

Belongs to the peptidase M20B family. Zn(2+) serves as cofactor.

It is found in the cytoplasm. The catalysed reaction is Release of the N-terminal residue from a tripeptide.. Cleaves the N-terminal amino acid of tripeptides. The protein is Peptidase T of Brevibacillus brevis (strain 47 / JCM 6285 / NBRC 100599).